We begin with the raw amino-acid sequence, 295 residues long: GTPase Era (295 aa).

The Era-type G domain occupies 3 to 170 (KSGFVTIVGR…VDLMKTELPE (168 aa)). Residues 11 to 18 (GRPNVGKS) are G1. Residue 11-18 (GRPNVGKS) coordinates GTP. Residues 37 to 41 (QTTRN) form a G2 region. Residues 58–61 (DTPG) form a G3 region. Residues 58 to 62 (DTPGI) and 120 to 123 (NKID) each bind GTP. A G4 region spans residues 120 to 123 (NKID). The interval 149 to 151 (IAA) is G5. One can recognise a KH type-2 domain in the interval 201–278 (LRDEVPHGIA…NVKIWVKVRK (78 aa)).

Belongs to the TRAFAC class TrmE-Era-EngA-EngB-Septin-like GTPase superfamily. Era GTPase family. As to quaternary structure, monomer.

It localises to the cytoplasm. Its subcellular location is the cell membrane. Functionally, an essential GTPase that binds both GDP and GTP, with rapid nucleotide exchange. Plays a role in 16S rRNA processing and 30S ribosomal subunit biogenesis and possibly also in cell cycle regulation and energy metabolism. This Clostridium botulinum (strain Eklund 17B / Type B) protein is GTPase Era.